Here is a 77-residue protein sequence, read N- to C-terminus: Putative snRNP Sm-like protein (77 aa).

The region spanning 4 to 76 (RPLDVLNRSL…VVFVSPAPGG (73 aa)) is the Sm domain.

Belongs to the snRNP Sm proteins family.

The protein is Putative snRNP Sm-like protein of Archaeoglobus fulgidus (strain ATCC 49558 / DSM 4304 / JCM 9628 / NBRC 100126 / VC-16).